The sequence spans 217 residues: Somatotropin (217 aa).

The first 27 residues, 1–27 (MATGSHTATLLLAVALLGLPWPQEAGA), serve as a signal peptide directing secretion. Residue His-46 participates in Zn(2+) binding. The cysteines at positions 79 and 190 are disulfide-linked. Ser-132 is modified (phosphoserine). Glu-199 is a binding site for Zn(2+). A disulfide bridge links Cys-207 with Cys-215.

The protein belongs to the somatotropin/prolactin family.

Its subcellular location is the secreted. Its function is as follows. Plays an important role in growth control. Its major role in stimulating body growth is to stimulate the liver and other tissues to secrete IGF1. It stimulates both the differentiation and proliferation of myoblasts. It also stimulates amino acid uptake and protein synthesis in muscle and other tissues. This Xanthonycticebus pygmaeus (Pygmy slow loris) protein is Somatotropin (GH1).